The following is a 331-amino-acid chain: Serine/threonine-protein phosphatase 6 catalytic subunit (331 aa).

Asp-79, His-81, Asp-107, and Asn-139 together coordinate Mn(2+). His-140 serves as the catalytic Proton donor. Residues His-189 and His-264 each coordinate Mn(2+).

It belongs to the PPP phosphatase family. PP-6 (PP-V) subfamily. In terms of assembly, forms a complex composed of catalytic subunit pph-6 and regulatory subunit saps-1; the interaction increases pph-6 and saps-1 protein stability. It depends on Mn(2+) as a cofactor.

It is found in the cytoplasm. The protein localises to the cell cortex. Its subcellular location is the cytoskeleton. The protein resides in the spindle pole. It carries out the reaction O-phospho-L-seryl-[protein] + H2O = L-seryl-[protein] + phosphate. It catalyses the reaction O-phospho-L-threonyl-[protein] + H2O = L-threonyl-[protein] + phosphate. In terms of biological role, catalytic subunit of protein phosphatase 6 (PP6). In complex with saps-1, promotes actomyosin contractility during cytokinesis by regulating the organization of cortical non-muscle myosin II nmy-2 and thus contributing to correct spindle positioning. Also required for the proper generation of pulling forces on spindle poles during anaphase by regulating the cortical localization of gpr-1, gpr-2 and lin-5. The polypeptide is Serine/threonine-protein phosphatase 6 catalytic subunit (Caenorhabditis elegans).